Here is a 424-residue protein sequence, read N- to C-terminus: Elongation factor 1-alpha (424 aa).

The tr-type G domain occupies 5-223 (KPHLNLITIG…DAFKVPEKPI (219 aa)). Residues 14-21 (GHVDHGKS) are G1. A GTP-binding site is contributed by 14-21 (GHVDHGKS). S21 lines the Mg(2+) pocket. Positions 70–74 (GVTID) are G2. The segment at 91-94 (DAPG) is G3. GTP-binding positions include 91 to 95 (DAPGH) and 148 to 151 (NKMD). The G4 stretch occupies residues 148 to 151 (NKMD). The segment at 187–189 (SGY) is G5.

The protein belongs to the TRAFAC class translation factor GTPase superfamily. Classic translation factor GTPase family. EF-Tu/EF-1A subfamily.

It is found in the cytoplasm. The catalysed reaction is GTP + H2O = GDP + phosphate + H(+). In terms of biological role, GTP hydrolase that promotes the GTP-dependent binding of aminoacyl-tRNA to the A-site of ribosomes during protein biosynthesis. This chain is Elongation factor 1-alpha, found in Thermoplasma acidophilum (strain ATCC 25905 / DSM 1728 / JCM 9062 / NBRC 15155 / AMRC-C165).